The sequence spans 226 residues: uncharacterized protein (226 aa).

2 disordered regions span residues 1–20 (MGAE…AVQT) and 205–226 (LDRK…QRDA).

This is an uncharacterized protein from Treponema pallidum (strain Nichols).